We begin with the raw amino-acid sequence, 177 residues long: Translation initiation factor IF-3 (177 aa).

The protein belongs to the IF-3 family. Monomer.

The protein localises to the cytoplasm. IF-3 binds to the 30S ribosomal subunit and shifts the equilibrium between 70S ribosomes and their 50S and 30S subunits in favor of the free subunits, thus enhancing the availability of 30S subunits on which protein synthesis initiation begins. The chain is Translation initiation factor IF-3 from Acaryochloris marina (strain MBIC 11017).